A 565-amino-acid chain; its full sequence is NAD-dependent malic enzyme (565 aa).

Tyrosine 104 acts as the Proton donor in catalysis. Arginine 157 serves as a coordination point for NAD(+). Lysine 175 (proton acceptor) is an active-site residue. Residues glutamate 246, aspartate 247, and aspartate 270 each contribute to the a divalent metal cation site. NAD(+) is bound by residues aspartate 270 and asparagine 418.

The protein belongs to the malic enzymes family. As to quaternary structure, homotetramer. The cofactor is Mg(2+). Mn(2+) serves as cofactor.

The enzyme catalyses (S)-malate + NAD(+) = pyruvate + CO2 + NADH. The catalysed reaction is oxaloacetate + H(+) = pyruvate + CO2. This Shigella sonnei (strain Ss046) protein is NAD-dependent malic enzyme.